The sequence spans 307 residues: Serine/threonine-protein phosphatase PP2A-2 catalytic subunit (307 aa).

4 residues coordinate Mn(2+): aspartate 55, histidine 57, aspartate 83, and asparagine 115. The Proton donor role is filled by histidine 116. Histidine 165 and histidine 239 together coordinate Mn(2+).

It belongs to the PPP phosphatase family. PP-2A subfamily. Requires Mn(2+) as cofactor.

Its subcellular location is the cytoplasm. The catalysed reaction is O-phospho-L-seryl-[protein] + H2O = L-seryl-[protein] + phosphate. It carries out the reaction O-phospho-L-threonyl-[protein] + H2O = L-threonyl-[protein] + phosphate. This is Serine/threonine-protein phosphatase PP2A-2 catalytic subunit (PP2A2) from Oryza sativa subsp. indica (Rice).